The chain runs to 373 residues: SWI/SNF-related matrix-associated actin-dependent regulator of chromatin subfamily B member 1 (373 aa).

The interval 1 to 101 (MALSKAFGQK…DEKYKAVSIS (101 aa)) is DNA-binding.

The protein belongs to the SNF5 family. Component of the multiprotein chromatin-remodeling complexes SWI/SNF. Component of neural progenitors-specific chromatin remodeling complex (npBAF complex) and the neuron-specific chromatin remodeling complex (nBAF complex). Component of the BAF (SWI/SNF) chromatin remodeling complex. Component of the SWI/SNF-B (PBAF) chromatin remodeling complex. Binds to double-stranded DNA.

It localises to the nucleus. In terms of biological role, involved in chromatin-remodeling. Core component of the BAF (SWI/SNF) complex. This ATP-dependent chromatin-remodeling complex plays important roles in cell proliferation and differentiation, in cellular antiviral activities and inhibition of tumor formation. Belongs to the neural progenitors-specific chromatin remodeling complex (npBAF complex) and the neuron-specific chromatin remodeling complex (nBAF complex) and may play a role in neural development. This is SWI/SNF-related matrix-associated actin-dependent regulator of chromatin subfamily B member 1 (smarcb1) from Dichotomyctere fluviatilis (Green pufferfish).